We begin with the raw amino-acid sequence, 62 residues long: Large ribosomal subunit protein eL24 (62 aa).

Positions 6, 9, 32, and 36 each coordinate Zn(2+). Residues cysteine 6–cysteine 36 form a C4-type zinc finger.

The protein belongs to the eukaryotic ribosomal protein eL24 family. As to quaternary structure, part of the 50S ribosomal subunit. Forms a cluster with proteins L3 and L14. Zn(2+) serves as cofactor.

Functionally, binds to the 23S rRNA. The protein is Large ribosomal subunit protein eL24 of Pyrobaculum calidifontis (strain DSM 21063 / JCM 11548 / VA1).